A 123-amino-acid chain; its full sequence is Cyclic ether formation enzyme xenC (123 aa).

An N-terminal signal peptide occupies residues 1-24 (MSSLLLSDVLSYGIFGFSALCVQA). The next 2 membrane-spanning stretches (helical) occupy residues 58-78 (SALR…LWSP) and 102-122 (LGES…AILV).

Belongs to the cyclic ether formation enzyme xenC family.

The protein resides in the membrane. The protein operates within mycotoxin biosynthesis. Its function is as follows. Cyclic ether formation enzyme; part of the gene cluster that mediates the biosynthesis of xenoacremones such as xenoacremone A, a compound that shows inhibitory activity toward the PI3K/AKT signaling pathway and which has the ability to induce apoptosis of A549 lung cancer cells. Within the pathway, cooperation of the hybrid PKS-NRPS xenE and the trans-acting enoyl reductase xenG is responsible for the formation of the reduced tyrosine-nonaketide derivative. The alpha/beta hydrolase xenA then accelerates intramolecular nucleophilic attack to give a pyrrolidone derivative. Subsequently, three enzymes, xenF, xenD, and xenC, coordinately participate in the conversion to xenoacremone B. XenF catalyzes sigmatropic rearrangement to form an A-ring, which leads to an unusual intermediate with a hexane ring, which is required for the formation of the tricarbocyclic product. Epoxidation catalyzed by xenD and the formation of the paracyclophane ether catalyzed by xenC initiate a spontaneous intramolecular Diels-Alder (IMDA) reaction to yield xenoacremone B. Spontaneous hydration of xenoacremone B leads to the formation of xenoacremone A, which undergoes subsequent methylation to afford xenoacremone C. The chain is Cyclic ether formation enzyme xenC from Xenoacremonium sinensis (Endophyte fungus).